A 321-amino-acid polypeptide reads, in one-letter code: Methionyl-tRNA formyltransferase (321 aa).

111 to 114 (GLLP) provides a ligand contact to (6S)-5,6,7,8-tetrahydrofolate.

The protein belongs to the Fmt family.

The catalysed reaction is L-methionyl-tRNA(fMet) + (6R)-10-formyltetrahydrofolate = N-formyl-L-methionyl-tRNA(fMet) + (6S)-5,6,7,8-tetrahydrofolate + H(+). Its function is as follows. Attaches a formyl group to the free amino group of methionyl-tRNA(fMet). The formyl group appears to play a dual role in the initiator identity of N-formylmethionyl-tRNA by promoting its recognition by IF2 and preventing the misappropriation of this tRNA by the elongation apparatus. The protein is Methionyl-tRNA formyltransferase of Chlamydia abortus (strain DSM 27085 / S26/3) (Chlamydophila abortus).